A 102-amino-acid polypeptide reads, in one-letter code: Small ribosomal subunit protein uS10 (102 aa).

This sequence belongs to the universal ribosomal protein uS10 family. As to quaternary structure, part of the 30S ribosomal subunit.

Involved in the binding of tRNA to the ribosomes. The polypeptide is Small ribosomal subunit protein uS10 (Methanoculleus marisnigri (strain ATCC 35101 / DSM 1498 / JR1)).